A 121-amino-acid polypeptide reads, in one-letter code: Pancreatic progenitor cell differentiation and proliferation factor (121 aa).

Disordered stretches follow at residues 22–47 (GSTS…PGLQ) and 101–121 (SRQL…PPPS). Low complexity predominate over residues 23 to 33 (STSSNSSCGSS). The span at 101-110 (SRQLSESSDS) shows a compositional bias: polar residues.

This sequence belongs to the PPDPF family.

Its function is as follows. Probable regulator of exocrine pancreas development. The sequence is that of Pancreatic progenitor cell differentiation and proliferation factor (ppdpf) from Salmo salar (Atlantic salmon).